A 269-amino-acid polypeptide reads, in one-letter code: RBPJ-interacting and tubulin-associated protein 1 (269 aa).

The Nuclear export signal signature appears at Val5–Val17. Disordered stretches follow at residues Gly67–Pro94 and Pro145–Lys269. A compositionally biased stretch (low complexity) spans Ser79–Thr93. The Nuclear localization signal signature appears at Leu92 to Ser108. The tract at residues Trp128–Pro156 is interaction with RBPJ/RBPSUH. The tract at residues Pro156–Lys269 is interaction with tubulin. 2 stretches are compositionally biased toward polar residues: residues Leu202–Thr220 and Val247–Lys269.

This sequence belongs to the RITA family. Interacts with RBPJ/RBPSUH.

The protein resides in the cytoplasm. The protein localises to the nucleus. It localises to the cytoskeleton. It is found in the microtubule organizing center. Its subcellular location is the centrosome. Tubulin-binding protein that acts as a negative regulator of Notch signaling pathway. Shuttles between the cytoplasm and the nucleus and mediates the nuclear export of RBPJ/RBPSUH, thereby preventing the interaction between RBPJ/RBPSUH and NICD product of Notch proteins (Notch intracellular domain), leading to down-regulate Notch-mediated transcription. May play a role in neurogenesis. This Bos taurus (Bovine) protein is RBPJ-interacting and tubulin-associated protein 1 (RITA1).